We begin with the raw amino-acid sequence, 640 residues long: ESX-3 secretion system protein EccA3 (640 aa).

Position 393–400 (393–400 (GPPGTGKT)) interacts with ATP.

Belongs to the CbxX/CfxQ family. In terms of assembly, part of the ESX-3 / type VII secretion system (T7SS), which is composed of cytosolic and membrane components.

The protein resides in the cytoplasm. Part of an ESX-3 / type VII specialized secretion system (T7SS), which exports several proteins. EccA3 exhibits ATPase activity and may provide energy for the export of ESX-3 substrates. The polypeptide is ESX-3 secretion system protein EccA3 (Mycobacterium leprae (strain TN)).